Reading from the N-terminus, the 282-residue chain is tRNA N(3)-cytidine methyltransferase METTL6 (282 aa).

S-adenosyl-L-methionine contacts are provided by tryptophan 45, tyrosine 49, glycine 87, aspartate 110, aspartate 136, leucine 137, and isoleucine 157.

This sequence belongs to the methyltransferase superfamily. METL family. As to quaternary structure, monomer. Interacts with SARS1/SerRS; interaction is mediated via tRNA(Ser) and is required for N(3)-methylcytidine methylation.

The protein localises to the cytoplasm. Its subcellular location is the nucleus. The enzyme catalyses cytidine(32) in tRNA(Ser) + S-adenosyl-L-methionine = N(3)-methylcytidine(32) in tRNA(Ser) + S-adenosyl-L-homocysteine + H(+). Functionally, S-adenosyl-L-methionine-dependent methyltransferase that mediates N(3)-methylcytidine modification of residue 32 of the tRNA anticodon loop of tRNA(Ser), including tRNA(Ser)(UGA) and tRNA(Ser)(GCU). Interaction with SARS1/SerRS is required for N(3)-methylcytidine methylation. This Pongo abelii (Sumatran orangutan) protein is tRNA N(3)-cytidine methyltransferase METTL6 (METTL6).